Reading from the N-terminus, the 613-residue chain is MAEGVFPGAIGIDLGTTYSCVATYENSVEIIANEQGNRVTPSFVAFTPEERLIGDAAKNQAALNPKNTVFDAKRLIGRRFDEESVQSDMKTWPFKVIDSNGAPLIEVEYLGETKTFSPQEISSMVLTKMKEIAEAKIGKKVEKAVVTVPAYFNDAQRQATKDAGAIAGLNVLRIINEPTAAAIAYGVGAGNSEKERHVLIFDLGGGTFDVSLLHIAGGVYTVKSTSGNTHLGGQDFDTNLLEHFKTEFKKKTGADISGDARALRRLRTAAERAKRTLSSVAQTTVEVDSLFDGEDFEATITRARFEDINAALFKSTLEPVEQVLKDAKISKSQIDEVVLVGGSTRIPKVQKLLSDFFDGKQLEKSINPDEAVAYGAAVQGAILTGQSTSDETKDLLLLDVAPLSLGVGMAGDVFGVVVPRNTTVPTIKRRTFTTVADHQTTVTFPVYQGERVNCKENTLLGEFDLKGVPPMPAGEPVLEAIFEVDANGILKVTAVEKSTGKSANITISNAIGRLSSEEIEQMVNQAEEFKAADEAFAKKHEARQRLESYISSVQQTVTDPVLSAKIKRNAKAKVEAALADAFSTLQIEDASADDLRKAEVGLKRAVTKAMSTR.

The segment at 1–391 is nucleotide binding domain (NBD); the sequence is MAEGVFPGAI…ILTGQSTSDE (391 aa). Residues 16-18, lysine 73, 205-207, 271-278, and glycine 342 contribute to the ATP site; these read TTY, GGT, and ERAKRTLS. Positions 392-402 are inter-domain linker; that stretch reads TKDLLLLDVAP. The segment at 403–613 is substrate binding domain (SBD); that stretch reads LSLGVGMAGD…RAVTKAMSTR (211 aa). Residues 516-612 are lid domain (SBDalpha); sequence SEEIEQMVNQ…KRAVTKAMST (97 aa). Residues 574-582 carry the Nuclear export signal motif; it reads VEAALADAF.

This sequence belongs to the heat shock protein 70 family. Ssb-type Hsp70 subfamily. Binds to ribosomes. Binds close to the ribosomal tunnel exit via contacts with both ribosomal proteins and rRNA. Directly interacts with nascent polypeptides. This interaction is dependent on the ribosome-associated complex (RAC). Interacts with SSE1. Interacts with FES1.

Its subcellular location is the cytoplasm. The catalysed reaction is ATP + H2O = ADP + phosphate + H(+). Functionally, ribosome-bound, Hsp70-type chaperone that assists in the cotranslational folding of newly synthesized proteins in the cytosol. Stimulates folding by interacting with nascent chains, binding to short, largely hydrophobic sequences exposed by unfolded proteins, thereby stabilizing longer, more slowly translated, and aggregation-prone nascent polypeptides and domains that cannot fold stably until fully synthesized. The Hsp70-protein substrate interaction depends on ATP-binding and on allosteric regulation between the NBD and the SBD. The ATP-bound state is characterized by a fast exchange rate of substrate (low affinity state), while in the ADP-bound state exchange is much slower (high affinity state). During the Hsp70 cycle, the chaperone switches between the ATP-bound state (open conformation) and the ADP-bound state (closed conformation) by major conformational rearrangements involving mainly the lid domain. Ssb cooperates with a specific Hsp40/Hsp70 co-chaperone termed the ribosome-associated complex (RAC), which stimulates the ATPase activity of the ribosome-associated pool of Ssbs and switches it to the high affinity substrate binding state. Hsp110 chaperone SSE1 and FES1 act as nucleotide exchange factors that cause substrate release. The polypeptide is Ribosome-associated molecular chaperone SSB1 (SSB1) (Kluyveromyces marxianus (Yeast)).